Reading from the N-terminus, the 638-residue chain is MRDSKDALDDKSGSFTSLLPPFGKQRGTSPNDAIPIKSPLERLANSVTSPEKPTVRTAIQKDSPRRKQIDDDQTPPKHLKRSFQNVTVVSPRKKKTIDVVELPFTKGGYGGFYDPRPGCLKFTTHEINVSYTDTSIPVIHIPVQLLKRCCWLQGWRDNLVESPVHAIHLTLKNRDMKRITIGDSASLLFLYNPLHVESARAGLDLLDQSDFSLTSPSSAKEFKQLLTLKQSTIIPRTPQKTVRSIVKQTSSPHSSKMPKHSLPSSPTPFNSNSGDSLLSRIKNSNQSSSERPTANNGAQEQNQSSSSAGNTSNDFSTLCSQGSDKTLLSDASCTTILVYPFSGTNSIAITNTDLTRLNEGEFLNDTIVDFYLRYLYCKLQTQNPSLANDTHIFNTFFYNRLTSKDKDGKRLGHRGVRKWTQKVDLFHKKYIIVPINETFHWYLAIICNIDRLMPVDTKLEEQDEIVMSSVEQPSASKTRQAELTSNSPAILIFDSLANLHKGALNYLREYLLEEAFERKNVHLKSTDIRGFHAKVPQQSNFSDCGIYALHFVELFLETPEQVIANTLDKSLRRTDAKNFDQQWNLQKINTMRCDLKGLIRRLSTEWSSNNERQSLSSGSNDEEDKENDDDLAILPITN.

Residues 1–12 (MRDSKDALDDKS) show a composition bias toward basic and acidic residues. Disordered stretches follow at residues 1–79 (MRDS…PKHL) and 238–314 (PQKT…TSND). Residues 238–249 (PQKTVRSIVKQT) show a composition bias toward polar residues. The segment covering 250-264 (SSPHSSKMPKHSLPS) has biased composition (low complexity). Residues 267 to 314 (TPFNSNSGDSLLSRIKNSNQSSSERPTANNGAQEQNQSSSSAGNTSND) show a composition bias toward polar residues. Residues H440 and D494 contribute to the active site. T526 carries the post-translational modification Phosphothreonine. C544 is an active-site residue. The segment covering 610–619 (NERQSLSSGS) has biased composition (polar residues). Residues 610–638 (NERQSLSSGSNDEEDKENDDDLAILPITN) form a disordered region. The span at 620–631 (NDEEDKENDDDL) shows a compositional bias: acidic residues.

It belongs to the peptidase C48 family.

The protein localises to the nucleus. This Schizosaccharomyces pombe (strain 972 / ATCC 24843) (Fission yeast) protein is Ubiquitin-like-specific protease 2 (ulp2).